Consider the following 467-residue polypeptide: Protein PHOSPHATE STARVATION RESPONSE 3 (467 aa).

The segment at 227-266 (MSLPVSSCSDQEDLQDARSPAKVQLSSSRSSSGTASCNKP) is disordered. The HTH myb-type domain occupies 262–322 (SCNKPRLRWT…HLQKYRLAKY (61 aa)). A DNA-binding region (H-T-H motif) is located at residues 293–318 (PKGVLKLMKVEGLTIYHIKSHLQKYR). The segment covering 327-337 (KEDKKQEEKKT) has biased composition (basic and acidic residues). Disordered stretches follow at residues 327–353 (KEDK…KSAQ) and 400–467 (RESI…VHDE). The segment covering 402-412 (SISSMTSTTEG) has biased composition (polar residues). Composition is skewed to basic and acidic residues over residues 419–428 (PMEKTEDKAE) and 438–467 (RITD…VHDE).

It is found in the nucleus. Its function is as follows. Transcription factor involved in phosphate starvation signaling. Binds to P1BS, an imperfect palindromic sequence 5'-GNATATNC-3', to promote the expression of inorganic phosphate (Pi) starvation-responsive genes. Functionally redundant with PHR1 and PHR2 in regulating Pi starvation response and Pi homeostasis. The chain is Protein PHOSPHATE STARVATION RESPONSE 3 from Oryza sativa subsp. indica (Rice).